The primary structure comprises 252 residues: Triosephosphate isomerase (252 aa).

Substrate is bound at residue 10–12 (NWK). His96 serves as the catalytic Electrophile. The Proton acceptor role is filled by Glu168. Substrate is bound by residues Gly174, Ser213, and 234–235 (GG).

The protein belongs to the triosephosphate isomerase family. In terms of assembly, homodimer.

It is found in the cytoplasm. The enzyme catalyses D-glyceraldehyde 3-phosphate = dihydroxyacetone phosphate. Its pathway is carbohydrate biosynthesis; gluconeogenesis. The protein operates within carbohydrate degradation; glycolysis; D-glyceraldehyde 3-phosphate from glycerone phosphate: step 1/1. Involved in the gluconeogenesis. Catalyzes stereospecifically the conversion of dihydroxyacetone phosphate (DHAP) to D-glyceraldehyde-3-phosphate (G3P). The protein is Triosephosphate isomerase of Nitrosomonas europaea (strain ATCC 19718 / CIP 103999 / KCTC 2705 / NBRC 14298).